The sequence spans 1176 residues: Pesticidal crystal protein Cry1Aa (1176 aa).

The protein belongs to the delta endotoxin family.

Promotes colloidosmotic lysis by binding to the midgut epithelial cells of many lepidopteran larvae. This chain is Pesticidal crystal protein Cry1Aa (cry1Aa), found in Bacillus thuringiensis subsp. entomocidus.